Reading from the N-terminus, the 469-residue chain is Cell division protein FtsP (469 aa).

A signal peptide (tat-type signal) is located at residues 1 to 27 (MKLSRRQFLQRSTLAGVATVTPTSLWA).

It belongs to the FtsP family. In terms of processing, predicted to be exported by the Tat system. The position of the signal peptide cleavage has not been experimentally proven.

The protein localises to the periplasm. In terms of biological role, cell division protein that is required for growth during stress conditions. May be involved in protecting or stabilizing the divisomal assembly under conditions of stress. The polypeptide is Cell division protein FtsP (Glaesserella parasuis serovar 5 (strain SH0165) (Haemophilus parasuis)).